A 107-amino-acid chain; its full sequence is UPF0473 protein Ldb1604 (107 aa).

It belongs to the UPF0473 family.

This Lactobacillus delbrueckii subsp. bulgaricus (strain ATCC 11842 / DSM 20081 / BCRC 10696 / JCM 1002 / NBRC 13953 / NCIMB 11778 / NCTC 12712 / WDCM 00102 / Lb 14) protein is UPF0473 protein Ldb1604.